Reading from the N-terminus, the 244-residue chain is UPF0173 metal-dependent hydrolase Rcas_3617 (244 aa).

This sequence belongs to the UPF0173 family.

The polypeptide is UPF0173 metal-dependent hydrolase Rcas_3617 (Roseiflexus castenholzii (strain DSM 13941 / HLO8)).